A 163-amino-acid polypeptide reads, in one-letter code: MFSKMFNYFASSSKTHLDNTQESAINCGQHSAEAASYAVKTLPQILLGLITFKEISGSVMTGYAFGFALPEFAKVIVKSLASTIFFHPTASMVGTVAVTVAANSENVVECIKNTAHALYDAGSTVYEGTLCAVNGAAAAATFVYDNVCSTDVQLSGNAIEAVL.

Belongs to the UPF0416 family.

This chain is UPF0416 protein RBE_1121, found in Rickettsia bellii (strain RML369-C).